Here is a 346-residue protein sequence, read N- to C-terminus: tRNA N6-adenosine threonylcarbamoyltransferase (346 aa).

Fe cation-binding residues include His111 and His115. Substrate contacts are provided by residues 134–138 (LVSGG), Asp167, Gly180, and Asn279. Asp307 is a binding site for Fe cation.

The protein belongs to the KAE1 / TsaD family. Fe(2+) serves as cofactor.

Its subcellular location is the cytoplasm. The enzyme catalyses L-threonylcarbamoyladenylate + adenosine(37) in tRNA = N(6)-L-threonylcarbamoyladenosine(37) in tRNA + AMP + H(+). Required for the formation of a threonylcarbamoyl group on adenosine at position 37 (t(6)A37) in tRNAs that read codons beginning with adenine. Is involved in the transfer of the threonylcarbamoyl moiety of threonylcarbamoyl-AMP (TC-AMP) to the N6 group of A37, together with TsaE and TsaB. TsaD likely plays a direct catalytic role in this reaction. The sequence is that of tRNA N6-adenosine threonylcarbamoyltransferase from Burkholderia ambifaria (strain ATCC BAA-244 / DSM 16087 / CCUG 44356 / LMG 19182 / AMMD) (Burkholderia cepacia (strain AMMD)).